The chain runs to 336 residues: Holliday junction branch migration complex subunit RuvB (336 aa).

The interval 1 to 180 (MRRTGIRLSW…FGIVEHLEYY (180 aa)) is large ATPase domain (RuvB-L). Residues Leu-18, Arg-19, Gly-60, Lys-63, Thr-64, Thr-65, 127–129 (EDF), Arg-170, Tyr-180, and Arg-217 each bind ATP. Position 64 (Thr-64) interacts with Mg(2+). The interval 181–251 (TPEELAQGVM…RALEALAALG (71 aa)) is small ATPAse domain (RuvB-S). Residues 254-336 (ELGLEKRDRE…PPPVGPLLEP (83 aa)) form a head domain (RuvB-H) region. DNA contacts are provided by Arg-309 and Arg-314.

This sequence belongs to the RuvB family. In terms of assembly, homohexamer. Forms an RuvA(8)-RuvB(12)-Holliday junction (HJ) complex. HJ DNA is sandwiched between 2 RuvA tetramers; dsDNA enters through RuvA and exits via RuvB. An RuvB hexamer assembles on each DNA strand where it exits the tetramer. Each RuvB hexamer is contacted by two RuvA subunits (via domain III) on 2 adjacent RuvB subunits; this complex drives branch migration. In the full resolvosome a probable DNA-RuvA(4)-RuvB(12)-RuvC(2) complex forms which resolves the HJ.

The protein localises to the cytoplasm. The enzyme catalyses ATP + H2O = ADP + phosphate + H(+). Functionally, the RuvA-RuvB-RuvC complex processes Holliday junction (HJ) DNA during genetic recombination and DNA repair, while the RuvA-RuvB complex plays an important role in the rescue of blocked DNA replication forks via replication fork reversal (RFR). RuvA specifically binds to HJ cruciform DNA, conferring on it an open structure. The RuvB hexamer acts as an ATP-dependent pump, pulling dsDNA into and through the RuvAB complex. RuvB forms 2 homohexamers on either side of HJ DNA bound by 1 or 2 RuvA tetramers; 4 subunits per hexamer contact DNA at a time. Coordinated motions by a converter formed by DNA-disengaged RuvB subunits stimulates ATP hydrolysis and nucleotide exchange. Immobilization of the converter enables RuvB to convert the ATP-contained energy into a lever motion, pulling 2 nucleotides of DNA out of the RuvA tetramer per ATP hydrolyzed, thus driving DNA branch migration. The RuvB motors rotate together with the DNA substrate, which together with the progressing nucleotide cycle form the mechanistic basis for DNA recombination by continuous HJ branch migration. Branch migration allows RuvC to scan DNA until it finds its consensus sequence, where it cleaves and resolves cruciform DNA. This chain is Holliday junction branch migration complex subunit RuvB, found in Thermus thermophilus (strain ATCC BAA-163 / DSM 7039 / HB27).